Consider the following 492-residue polypeptide: Probable sphingolipid transporter spinster homolog 1 (492 aa).

Residues 29–49 (FVTILCIINLINYVDRGVIAS) traverse the membrane as a helical segment. 2 N-linked (GlcNAc...) asparagine glycosylation sites follow: N53 and N76. 7 helical membrane passes run 83-103 (GLLS…FAGL), 119-139 (VWTI…IAVF), 141-161 (MFVG…IDDS), 169-189 (FWLG…YVFG), 200-220 (WAFY…FCIK), 279-299 (VFIV…AYSY), and 317-337 (IFGG…SYVL). An N-linked (GlcNAc...) asparagine glycan is attached at N341. A run of 4 helical transmembrane segments spans residues 348–368 (FKLL…AFLM), 372–392 (YAFI…QAPV), 407–427 (LSMA…SSPL), and 442–462 (TLII…GIFM). S472 carries the post-translational modification Phosphoserine. Residues 472 to 481 (SEDDEVEEDK) are compositionally biased toward acidic residues. A disordered region spans residues 472 to 492 (SEDDEVEEDKLESKTENSTLA). An N-linked (GlcNAc...) asparagine glycan is attached at N488.

Belongs to the major facilitator superfamily. Spinster (TC 2.A.1.49) family.

Its subcellular location is the late endosome membrane. It localises to the lysosome membrane. Functionally, probable sphingolipid transporter that plays a central role in endosomes and/or lysosomes storage. In Arabidopsis thaliana (Mouse-ear cress), this protein is Probable sphingolipid transporter spinster homolog 1.